The chain runs to 98 residues: NADH-ubiquinone oxidoreductase chain 4L (98 aa).

Helical transmembrane passes span 2–22 (PSIF…MLIF), 37–57 (MLSM…TMSF), and 61–81 (ILLL…LVTV).

Belongs to the complex I subunit 4L family. As to quaternary structure, core subunit of respiratory chain NADH dehydrogenase (Complex I) which is composed of 45 different subunits.

The protein resides in the mitochondrion inner membrane. The enzyme catalyses a ubiquinone + NADH + 5 H(+)(in) = a ubiquinol + NAD(+) + 4 H(+)(out). In terms of biological role, core subunit of the mitochondrial membrane respiratory chain NADH dehydrogenase (Complex I) which catalyzes electron transfer from NADH through the respiratory chain, using ubiquinone as an electron acceptor. Part of the enzyme membrane arm which is embedded in the lipid bilayer and involved in proton translocation. This is NADH-ubiquinone oxidoreductase chain 4L (MT-ND4L) from Varecia rubra (Red ruffed lemur).